Consider the following 770-residue polypeptide: Signal transducer and activator of transcription 3 (770 aa).

Ala2 bears the N-acetylalanine mark. N6-acetyllysine occurs at positions 49 and 87. The short motif at 150 to 162 (DVRKRVQDLEQKM) is the Essential for nuclear import element. The region spanning 580-670 (WNEGYIMGFI…DATNILVSPL (91 aa)) is the SH2 domain. Allysine; alternate is present on residues Lys601, Lys615, and Lys631. N6-acetyllysine; alternate occurs at positions 601, 615, and 631. At Tyr640 the chain carries Phosphotyrosine; by TYK2. Lys685 is subject to Allysine; alternate. The residue at position 685 (Lys685) is an N6-acetyllysine; alternate. Tyr705 is subject to Phosphotyrosine; by FER and PTK6. The residue at position 707 (Lys707) is an N6-acetyllysine. Thr714 is modified (phosphothreonine). Phosphoserine; by DYRK2, NLK, NEK6, IRAK1, RPS6KA5, ZIPK/DAPK3 and PKC/PRKCE is present on Ser727.

This sequence belongs to the transcription factor STAT family. Forms a homodimer or a heterodimer with a related family member (at least STAT1). Component of a promoter-binding complex composed of STAT3, NFATC3 and NFATC4; complex formation is enhanced by calcineurin. Interacts with IL31RA, NCOA1, PELP1, SIPAR, SOCS7, STATIP1 and TMF1. Interacts with IL23R in presence of IL23. Interacts (via SH2 domain) with NLK. Interacts with ARL2BP; the interaction is enhanced by LIF and JAK1 expression. Interacts with KPNA4 and KPNA5; KPNA4 may be the primary mediator of nuclear import. Interacts with CAV2; the interaction is increased on insulin-induced tyrosine phosphorylation of CAV2 and leads to STAT3 activation. Interacts with ARL2BP; interaction is enhanced with ARL2. Interacts with NEK6. Binds to CDK9 when activated and nuclear. Interacts with BMX. Interacts with ZIPK/DAPK3. Interacts with PIAS3; the interaction occurs on stimulation by IL6, CNTF or OSM and inhibits the DNA binding activity of STAT3. In prostate cancer cells, interacts with PRKCE and promotes DNA binding activity of STAT3. Interacts with STMN3, antagonizing its microtubule-destabilizing activity. Interacts with the 'Lys-129' acetylated form of BIRC5/survivin. Interacts with FER. Interacts (via SH2 domain) with EIF2AK2/PKR (via the kinase catalytic domain). Interacts with FGFR4. Interacts with INPP5F; the interaction is independent of STAT3 Tyr-705 phosphorylation status. Interacts with OCIAD1. Interacts with OCIAD2. Interacts (unphosphorylated or phosphorylated at Ser-727) with PHB1. Interacts and may form heterodimers with NHLH1. Found in a complex with SLC39A6, SLC39A10 and with the 'Ser-727' phosphorylated form of STAT3 throughout mitosis. Interacts (when acetylated) with EP300 (via bromo domain); interaction takes place following STAT3 acetylation by EP300 and promotes enhanceosome assembly. Interacts (when acetylated) with BRD2 (via bromo domain); interaction promotes STAT3 recruitment to chromatin and T-helper Th17 cell differentiation. Interacts with FAM220A/SIPAR; the interaction occurs in both the nucleus and the cytoplasm, is enhanced by IL6 and promotes STAT3 dephosphorylation. Interacts in both unphosphorylated and phosphorylated forms with FAM220A but interacts preferentially in the phosphorylated form in the nucleus. Interacts with PTPN2; the interaction is promoted by FAM220A and leads to STAT3 dephosphorylation which negatively regulates STAT3 transcriptional activator activity. In terms of processing, activated through tyrosine phosphorylation by BMX. Tyrosine phosphorylated in response to IL6, IL11, CNTF, LIF, KITLG/SCF, CSF1, EGF, PDGF, IFN-alpha, LEP and OSM. Activated KIT promotes phosphorylation on tyrosine residues and subsequent translocation to the nucleus. Tyrosine phosphorylated in response to constitutively activated FGFR1, FGFR2, FGFR3 and FGFR4. Phosphorylated on serine upon DNA damage, probably by ATM or ATR. Serine phosphorylation is important for the formation of stable DNA-binding STAT3 homodimers and maximal transcriptional activity. ARL2BP may participate in keeping the phosphorylated state of STAT3 within the nucleus. Tyrosine phosphorylated upon stimulation with EGF. Upon LPS challenge, phosphorylated within the nucleus by IRAK1. Upon UV-A treatment, phosphorylated on Ser-727 by RPS6KA5. Dephosphorylation on tyrosine residues by PTPN2 negatively regulates IL6/interleukin-6 signaling. Phosphorylation at Tyr-705 by PTK6, isoform M2 of PKM (PKM2) or FER leads to an increase of its transcriptional activity. Phosphorylation at Tyr-705 is increased in the presence of calcineurin. Phosphorylation at Tyr-640 by TYK2 negatively regulates transcriptional activity. Acetylated on lysine residues by EP300/p300, promoting its activation. Acetylation at Lys-49 and Lys-87 by EP300/p300 promotes its activation. Acetylation at Lys-87 by EP300/p300 promotes its association with BRD2 and recruitment to chromatin. Deacetylated at Lys-49 and Lys-87 by HDAC1. Acetylation at Lys-685 by EP300/p300 promotes its homodimerization and activation. Deacetylated at Lys-685 by HDAC3. Acetylated on lysine residues by CREBBP. Deacetylation by LOXL3 leads to disrupt STAT3 dimerization and inhibit STAT3 transcription activity. Oxidation of lysine residues to allysine on STAT3 preferentially takes place on lysine residues that are acetylated. Post-translationally, some lysine residues are oxidized to allysine by LOXL3, leading to disrupt STAT3 dimerization and inhibit STAT3 transcription activity. Oxidation of lysine residues to allysine on STAT3 preferentially takes place on lysine residues that are acetylated. In terms of processing, (Microbial infection) Phosphorylated on Tyr-705 in the presence of S.typhimurium SarA. Expressed in ventricular cardiomyocytes (at protein level). Expressed in the lung (at protein level). Expressed in the liver, spleen and kidney. As to expression, expressed in the liver.

Its subcellular location is the cytoplasm. The protein localises to the nucleus. Its function is as follows. Signal transducer and transcription activator that mediates cellular responses to interleukins, KITLG/SCF, LEP and other growth factors. Once activated, recruits coactivators, such as NCOA1 or MED1, to the promoter region of the target gene. May mediate cellular responses to activated FGFR1, FGFR2, FGFR3 and FGFR4. Upon activation of IL6ST/gp130 signaling by interleukin-6 (IL6), binds to the IL6-responsive elements identified in the promoters of various acute-phase protein genes. Activated by IL31 through IL31RA. Acts as a regulator of inflammatory response by regulating differentiation of naive CD4(+) T-cells into T-helper Th17 or regulatory T-cells (Treg): acetylation promotes its transcription activity and cell differentiation while deacetylation and oxidation of lysine residues by LOXL3 inhibits differentiation. Involved in cell cycle regulation by inducing the expression of key genes for the progression from G1 to S phase, such as CCND1. Mediates the effects of LEP on melanocortin production, body energy homeostasis and lactation. May play an apoptotic role by transctivating BIRC5 expression under LEP activation. Cytoplasmic STAT3 represses macroautophagy by inhibiting EIF2AK2/PKR activity. Plays a crucial role in basal beta cell functions, such as regulation of insulin secretion. Following JAK/STAT signaling activation and as part of a complex with NFATC3 and NFATC4, binds to the alpha-beta E4 promoter region of CRYAB and activates transcription in cardiomyocytes. Plays an important role in host defense in methicillin-resistant S.aureus lung infection by regulating the expression of the antimicrobial lectin REG3G. This Mus musculus (Mouse) protein is Signal transducer and activator of transcription 3.